The chain runs to 75 residues: Large ribosomal subunit protein bL31 (75 aa).

Belongs to the bacterial ribosomal protein bL31 family. Type A subfamily. In terms of assembly, part of the 50S ribosomal subunit.

Its function is as follows. Binds the 23S rRNA. The polypeptide is Large ribosomal subunit protein bL31 (Rhodopseudomonas palustris (strain BisB5)).